A 201-amino-acid polypeptide reads, in one-letter code: 3-isopropylmalate dehydratase small subunit (201 aa).

The protein belongs to the LeuD family. LeuD type 1 subfamily. In terms of assembly, heterodimer of LeuC and LeuD.

The enzyme catalyses (2R,3S)-3-isopropylmalate = (2S)-2-isopropylmalate. It participates in amino-acid biosynthesis; L-leucine biosynthesis; L-leucine from 3-methyl-2-oxobutanoate: step 2/4. Catalyzes the isomerization between 2-isopropylmalate and 3-isopropylmalate, via the formation of 2-isopropylmaleate. The sequence is that of 3-isopropylmalate dehydratase small subunit from Shigella dysenteriae serotype 1 (strain Sd197).